Here is a 419-residue protein sequence, read N- to C-terminus: Transcription termination factor Rho (419 aa).

The Rho RNA-BD domain maps to 48–123 (DIFGDGVLEI…LKVNEVNFDK (76 aa)). 3 RNA-binding regions span residues 61–66 (GFGFLR), 78–80 (DIY), and 108–110 (ERY). Residues 169–174 (GRGQRG), 181–186 (KAGKTM), and arginine 212 each bind ATP. Residues 284-288 (VLTGG) form an RNA-binding 2 region.

The protein belongs to the Rho family. In terms of assembly, homohexamer. The homohexamer assembles into an open ring structure.

In terms of biological role, facilitates transcription termination by a mechanism that involves Rho binding to the nascent RNA, activation of Rho's RNA-dependent ATPase activity, and release of the mRNA from the DNA template. This is Transcription termination factor Rho from Escherichia coli O157:H7.